Consider the following 162-residue polypeptide: 2-C-methyl-D-erythritol 2,4-cyclodiphosphate synthase (162 aa).

2 residues coordinate a divalent metal cation: D12 and H14. 4-CDP-2-C-methyl-D-erythritol 2-phosphate-binding positions include 12-14 (DVH) and 38-39 (HS). H46 is an a divalent metal cation binding site. Residues 60–62 (DIG), 136–139 (TTTE), F143, and R146 contribute to the 4-CDP-2-C-methyl-D-erythritol 2-phosphate site.

It belongs to the IspF family. In terms of assembly, homotrimer. It depends on a divalent metal cation as a cofactor.

It catalyses the reaction 4-CDP-2-C-methyl-D-erythritol 2-phosphate = 2-C-methyl-D-erythritol 2,4-cyclic diphosphate + CMP. Its pathway is isoprenoid biosynthesis; isopentenyl diphosphate biosynthesis via DXP pathway; isopentenyl diphosphate from 1-deoxy-D-xylulose 5-phosphate: step 4/6. In terms of biological role, involved in the biosynthesis of isopentenyl diphosphate (IPP) and dimethylallyl diphosphate (DMAPP), two major building blocks of isoprenoid compounds. Catalyzes the conversion of 4-diphosphocytidyl-2-C-methyl-D-erythritol 2-phosphate (CDP-ME2P) to 2-C-methyl-D-erythritol 2,4-cyclodiphosphate (ME-CPP) with a corresponding release of cytidine 5-monophosphate (CMP). The sequence is that of 2-C-methyl-D-erythritol 2,4-cyclodiphosphate synthase from Porphyromonas gingivalis (strain ATCC BAA-308 / W83).